Reading from the N-terminus, the 337-residue chain is Mycothiol acetyltransferase (337 aa).

2 N-acetyltransferase domains span residues 11-151 and 154-337; these read LDER…FELP and VRLR…MYRK. E37 contributes to the 1D-myo-inositol 2-(L-cysteinylamino)-2-deoxy-alpha-D-glucopyranoside binding site. 81 to 83 is an acetyl-CoA binding site; the sequence is LVI. A 1D-myo-inositol 2-(L-cysteinylamino)-2-deoxy-alpha-D-glucopyranoside-binding site is contributed by E182. The interval 210-246 is disordered; it reads RPTGSGDGDVADGGSTDGGPADSGSADGGAGEGGTGD. Over residues 221–234 the composition is skewed to low complexity; the sequence is DGGSTDGGPADSGS. Residues 235 to 246 show a composition bias toward gly residues; the sequence is ADGGAGEGGTGD. 1D-myo-inositol 2-(L-cysteinylamino)-2-deoxy-alpha-D-glucopyranoside is bound by residues K257 and E271. Acetyl-CoA-binding positions include 275-277 and 282-288; these read VGV and QGGGLGR. 1D-myo-inositol 2-(L-cysteinylamino)-2-deoxy-alpha-D-glucopyranoside is bound at residue Y309. Acetyl-CoA is bound at residue 314–319; it reads NTAAIR.

Belongs to the acetyltransferase family. MshD subfamily. In terms of assembly, monomer.

It catalyses the reaction 1D-myo-inositol 2-(L-cysteinylamino)-2-deoxy-alpha-D-glucopyranoside + acetyl-CoA = mycothiol + CoA + H(+). Its function is as follows. Catalyzes the transfer of acetyl from acetyl-CoA to desacetylmycothiol (Cys-GlcN-Ins) to form mycothiol. The protein is Mycothiol acetyltransferase of Streptosporangium roseum (strain ATCC 12428 / DSM 43021 / JCM 3005 / KCTC 9067 / NCIMB 10171 / NRRL 2505 / NI 9100).